The following is a 436-amino-acid chain: Protein TolB homolog (436 aa).

A signal peptide spans 1-27 (MRHSIRLTAALLLAFIACFSFPLSAMA).

This sequence belongs to the TolB family.

The protein localises to the periplasm. In Chlorobium luteolum (strain DSM 273 / BCRC 81028 / 2530) (Pelodictyon luteolum), this protein is Protein TolB homolog.